Consider the following 61-residue polypeptide: Small ribosomal subunit protein uS14 (61 aa).

Residues C24, C27, C40, and C43 each coordinate Zn(2+).

This sequence belongs to the universal ribosomal protein uS14 family. Zinc-binding uS14 subfamily. Part of the 30S ribosomal subunit. Contacts proteins S3 and S10. It depends on Zn(2+) as a cofactor.

Functionally, binds 16S rRNA, required for the assembly of 30S particles and may also be responsible for determining the conformation of the 16S rRNA at the A site. This Mesoplasma florum (strain ATCC 33453 / NBRC 100688 / NCTC 11704 / L1) (Acholeplasma florum) protein is Small ribosomal subunit protein uS14.